The sequence spans 238 residues: Uridylate kinase (238 aa).

Lys-10–Gly-13 serves as a coordination point for ATP. Residues Gly-18–Gly-23 are involved in allosteric activation by GTP. Residue Gly-52 coordinates UMP. ATP is bound by residues Gly-53 and Arg-57. UMP-binding positions include Asp-73 and Thr-134–Thr-141. ATP contacts are provided by Thr-161, Tyr-167, and Asp-170.

Belongs to the UMP kinase family. As to quaternary structure, homohexamer.

It is found in the cytoplasm. The catalysed reaction is UMP + ATP = UDP + ADP. Its pathway is pyrimidine metabolism; CTP biosynthesis via de novo pathway; UDP from UMP (UMPK route): step 1/1. Allosterically activated by GTP. Inhibited by UTP. In terms of biological role, catalyzes the reversible phosphorylation of UMP to UDP. This chain is Uridylate kinase, found in Campylobacter fetus subsp. fetus (strain 82-40).